Consider the following 558-residue polypeptide: Dihydroxy-acid dehydratase (558 aa).

Aspartate 78 provides a ligand contact to Mg(2+). Cysteine 119 contacts [2Fe-2S] cluster. Mg(2+) contacts are provided by aspartate 120 and lysine 121. The residue at position 121 (lysine 121) is an N6-carboxylysine. Cysteine 192 contacts [2Fe-2S] cluster. Glutamate 445 is a binding site for Mg(2+). Serine 471 serves as the catalytic Proton acceptor.

The protein belongs to the IlvD/Edd family. As to quaternary structure, homodimer. [2Fe-2S] cluster serves as cofactor. Mg(2+) is required as a cofactor.

The catalysed reaction is (2R)-2,3-dihydroxy-3-methylbutanoate = 3-methyl-2-oxobutanoate + H2O. It carries out the reaction (2R,3R)-2,3-dihydroxy-3-methylpentanoate = (S)-3-methyl-2-oxopentanoate + H2O. It functions in the pathway amino-acid biosynthesis; L-isoleucine biosynthesis; L-isoleucine from 2-oxobutanoate: step 3/4. Its pathway is amino-acid biosynthesis; L-valine biosynthesis; L-valine from pyruvate: step 3/4. Functionally, functions in the biosynthesis of branched-chain amino acids. Catalyzes the dehydration of (2R,3R)-2,3-dihydroxy-3-methylpentanoate (2,3-dihydroxy-3-methylvalerate) into 2-oxo-3-methylpentanoate (2-oxo-3-methylvalerate) and of (2R)-2,3-dihydroxy-3-methylbutanoate (2,3-dihydroxyisovalerate) into 2-oxo-3-methylbutanoate (2-oxoisovalerate), the penultimate precursor to L-isoleucine and L-valine, respectively. In Akkermansia muciniphila (strain ATCC BAA-835 / DSM 22959 / JCM 33894 / BCRC 81048 / CCUG 64013 / CIP 107961 / Muc), this protein is Dihydroxy-acid dehydratase.